A 233-amino-acid chain; its full sequence is Phosphatidylserine decarboxylase proenzyme (233 aa).

Ser-190 acts as the Schiff-base intermediate with substrate; via pyruvic acid in catalysis. Ser-190 carries the pyruvic acid (Ser); by autocatalysis modification.

Belongs to the phosphatidylserine decarboxylase family. PSD-A subfamily. As to quaternary structure, heterodimer of a large membrane-associated beta subunit and a small pyruvoyl-containing alpha subunit. Pyruvate is required as a cofactor. Is synthesized initially as an inactive proenzyme. Formation of the active enzyme involves a self-maturation process in which the active site pyruvoyl group is generated from an internal serine residue via an autocatalytic post-translational modification. Two non-identical subunits are generated from the proenzyme in this reaction, and the pyruvate is formed at the N-terminus of the alpha chain, which is derived from the carboxyl end of the proenzyme. The post-translation cleavage follows an unusual pathway, termed non-hydrolytic serinolysis, in which the side chain hydroxyl group of the serine supplies its oxygen atom to form the C-terminus of the beta chain, while the remainder of the serine residue undergoes an oxidative deamination to produce ammonia and the pyruvoyl prosthetic group on the alpha chain.

The protein resides in the cell membrane. The catalysed reaction is a 1,2-diacyl-sn-glycero-3-phospho-L-serine + H(+) = a 1,2-diacyl-sn-glycero-3-phosphoethanolamine + CO2. Its pathway is phospholipid metabolism; phosphatidylethanolamine biosynthesis; phosphatidylethanolamine from CDP-diacylglycerol: step 2/2. Functionally, catalyzes the formation of phosphatidylethanolamine (PtdEtn) from phosphatidylserine (PtdSer). This is Phosphatidylserine decarboxylase proenzyme from Azorhizobium caulinodans (strain ATCC 43989 / DSM 5975 / JCM 20966 / LMG 6465 / NBRC 14845 / NCIMB 13405 / ORS 571).